A 156-amino-acid chain; its full sequence is Flagellar assembly factor FliW (156 aa).

It belongs to the FliW family. In terms of assembly, interacts with translational regulator CsrA and flagellin(s).

The protein localises to the cytoplasm. In terms of biological role, acts as an anti-CsrA protein, binds CsrA and prevents it from repressing translation of its target genes, one of which is flagellin. Binds to flagellin and participates in the assembly of the flagellum. The chain is Flagellar assembly factor FliW from Lachnoclostridium phytofermentans (strain ATCC 700394 / DSM 18823 / ISDg) (Clostridium phytofermentans).